Consider the following 386-residue polypeptide: Putative aminotransferase YugH (386 aa).

At K234 the chain carries N6-(pyridoxal phosphate)lysine.

The protein belongs to the class-I pyridoxal-phosphate-dependent aminotransferase family. The cofactor is pyridoxal 5'-phosphate.

It is found in the cytoplasm. This is Putative aminotransferase YugH (yugH) from Bacillus subtilis (strain 168).